A 310-amino-acid chain; its full sequence is tRNA dimethylallyltransferase (310 aa).

Position 9-16 (9-16 (GPTAVGKT)) interacts with ATP. 11 to 16 (TAVGKT) provides a ligand contact to substrate. The segment at 34 to 37 (DSMQ) is interaction with substrate tRNA.

This sequence belongs to the IPP transferase family. In terms of assembly, monomer. Mg(2+) serves as cofactor.

It carries out the reaction adenosine(37) in tRNA + dimethylallyl diphosphate = N(6)-dimethylallyladenosine(37) in tRNA + diphosphate. Its function is as follows. Catalyzes the transfer of a dimethylallyl group onto the adenine at position 37 in tRNAs that read codons beginning with uridine, leading to the formation of N6-(dimethylallyl)adenosine (i(6)A). The sequence is that of tRNA dimethylallyltransferase from Pediococcus pentosaceus (strain ATCC 25745 / CCUG 21536 / LMG 10740 / 183-1w).